The primary structure comprises 400 residues: Large envelope protein (400 aa).

Position 1 is an N-acetylmethionine (Met1). Gly2 carries the N-myristoyl glycine; by host lipid modification. The pre-S1 stretch occupies residues 2–119; it reads GGWSSKPRQG…PPLRDSHPQA (118 aa). Residues 2–174 are pre-S; it reads GGWSSKPRQG…FSRIGDPALN (173 aa). Residues 2 to 181 are Virion surface; in external conformation-facing; the sequence is GGWSSKPRQG…ALNMENITSG (180 aa). Residues 2–253 are Intravirion; in internal conformation-facing; that stretch reads GGWSSKPRQG…PGYRWMCLRR (252 aa). Trp4 is a glycosylation site (N-linked (GlcNAc...) asparagine). Positions 85–118 are disordered; that stretch reads LTTVPAAPPPASSNRQSGKQPTPISPPLRDSHPQ. Residues 96-106 are compositionally biased toward polar residues; the sequence is SSNRQSGKQPT. The tract at residues 120–174 is pre-S2; the sequence is MQWNSTTFHQTLQDPRVRGLYFPAGGSSSGTVNPVPTTASPISSIFSRIGDPALN. Residues 182–202 form a helical membrane-spanning segment; sequence FLGPLLVLQAGFFLLTRILTI. At 203-253 the chain is on the intravirion; in external conformation side; the sequence is PQSLDSWWTSLNFLGGTTVCLGQNSQSPISNHSPTSCPPTCPGYRWMCLRR. A helical membrane pass occupies residues 254 to 274; it reads FIIFLFILLLCLIFLLVLLDY. Over 275-348 the chain is Virion surface; the sequence is QGMLPVCPLI…WASARFSWLS (74 aa). Residue Asn320 is glycosylated (N-linked (GlcNAc...) asparagine; by host). Residues 349 to 369 form a helical membrane-spanning segment; the sequence is LLVPFVQWFVGLSPTVWLSVI. Over 370 to 375 the chain is Intravirion; the sequence is WMMWYW. A helical transmembrane segment spans residues 376–398; the sequence is GPSLYSILSPFLPLLPIFFCLWV. Topologically, residues 399-400 are virion surface; that stretch reads YI.

It belongs to the orthohepadnavirus major surface antigen family. In its internal form (Li-HBsAg), interacts with the capsid protein and with the isoform S. Interacts with host chaperone CANX. In terms of assembly, associates with host chaperone CANX through its pre-S2 N glycan; this association may be essential for isoform M proper secretion. As to quaternary structure, interacts with isoform L. Interacts with the antigens of satellite virus HDV (HDVAgs); this interaction is required for encapsidation of HDV genomic RNA. Isoform M is N-terminally acetylated by host at a ratio of 90%, and N-glycosylated by host at the pre-S2 region. Post-translationally, myristoylated.

It localises to the virion membrane. Its function is as follows. The large envelope protein exists in two topological conformations, one which is termed 'external' or Le-HBsAg and the other 'internal' or Li-HBsAg. In its external conformation the protein attaches the virus to cell receptors and thereby initiating infection. This interaction determines the species specificity and liver tropism. This attachment induces virion internalization predominantly through caveolin-mediated endocytosis. The large envelope protein also assures fusion between virion membrane and endosomal membrane. In its internal conformation the protein plays a role in virion morphogenesis and mediates the contact with the nucleocapsid like a matrix protein. The middle envelope protein plays an important role in the budding of the virion. It is involved in the induction of budding in a nucleocapsid independent way. In this process the majority of envelope proteins bud to form subviral lipoprotein particles of 22 nm of diameter that do not contain a nucleocapsid. This chain is Large envelope protein, found in Homo sapiens (Human).